A 514-amino-acid chain; its full sequence is Transcription termination factor Rho (514 aa).

The segment at 25-52 (EPSSTPGPARNARRSNRRMRHPDKDVDK) is disordered. A compositionally biased stretch (basic residues) spans 35-45 (NARRSNRRMRH). One can recognise a Rho RNA-BD domain in the interval 141-216 (LMYGEGTLEI…LRIEAINHAD (76 aa)). Residues 259 to 264 (GFGQRG), 271 to 276 (RAGKTM), and R302 each bind ATP.

It belongs to the Rho family. Homohexamer. The homohexamer assembles into an open ring structure.

Its function is as follows. Facilitates transcription termination by a mechanism that involves Rho binding to the nascent RNA, activation of Rho's RNA-dependent ATPase activity, and release of the mRNA from the DNA template. The sequence is that of Transcription termination factor Rho from Rhodopirellula baltica (strain DSM 10527 / NCIMB 13988 / SH1).